Here is a 77-residue protein sequence, read N- to C-terminus: U8-lycotoxin-Ls1o (77 aa).

The first 20 residues, 1-20, serve as a signal peptide directing secretion; sequence MKLMIFTGLVLFAIVSLIEA. Residues 21–26 constitute a propeptide that is removed on maturation; it reads QAENGK.

This sequence belongs to the neurotoxin 19 (CSTX) family. 08 (U8-Lctx) subfamily. Contains 4 disulfide bonds. Expressed by the venom gland.

It localises to the secreted. This Lycosa singoriensis (Wolf spider) protein is U8-lycotoxin-Ls1o.